The following is a 333-amino-acid chain: tRNA N6-adenosine threonylcarbamoyltransferase (333 aa).

Positions 111 and 115 each coordinate Fe cation. Substrate contacts are provided by residues L134 to G138, D167, G180, and N272. D300 provides a ligand contact to Fe cation.

This sequence belongs to the KAE1 / TsaD family. Fe(2+) is required as a cofactor.

Its subcellular location is the cytoplasm. The enzyme catalyses L-threonylcarbamoyladenylate + adenosine(37) in tRNA = N(6)-L-threonylcarbamoyladenosine(37) in tRNA + AMP + H(+). In terms of biological role, required for the formation of a threonylcarbamoyl group on adenosine at position 37 (t(6)A37) in tRNAs that read codons beginning with adenine. Is involved in the transfer of the threonylcarbamoyl moiety of threonylcarbamoyl-AMP (TC-AMP) to the N6 group of A37, together with TsaE and TsaB. TsaD likely plays a direct catalytic role in this reaction. The chain is tRNA N6-adenosine threonylcarbamoyltransferase from Legionella pneumophila subsp. pneumophila (strain Philadelphia 1 / ATCC 33152 / DSM 7513).